The following is a 464-amino-acid chain: ATP synthase subunit beta 2 (464 aa).

Position 147 to 154 (147 to 154 (GGAGVGKT)) interacts with ATP.

Belongs to the ATPase alpha/beta chains family. As to quaternary structure, F-type ATPases have 2 components, CF(1) - the catalytic core - and CF(0) - the membrane proton channel. CF(1) has five subunits: alpha(3), beta(3), gamma(1), delta(1), epsilon(1). CF(0) has four main subunits: a(1), b(1), b'(1) and c(9-12).

It localises to the cell inner membrane. It carries out the reaction ATP + H2O + 4 H(+)(in) = ADP + phosphate + 5 H(+)(out). Its function is as follows. Produces ATP from ADP in the presence of a proton gradient across the membrane. The catalytic sites are hosted primarily by the beta subunits. This is ATP synthase subunit beta 2 from Cereibacter sphaeroides (strain ATCC 17023 / DSM 158 / JCM 6121 / CCUG 31486 / LMG 2827 / NBRC 12203 / NCIMB 8253 / ATH 2.4.1.) (Rhodobacter sphaeroides).